A 248-amino-acid polypeptide reads, in one-letter code: Adenosylcobinamide-GDP ribazoletransferase (248 aa).

6 helical membrane passes run 36–56 (FFLP…YLGL), 59–79 (FLPA…VTGG), 114–134 (GTIA…SLVL), 137–157 (YSIA…FLCL), 170–190 (IFIG…ILAL), and 199–219 (ATII…LLCL).

The protein belongs to the CobS family. The cofactor is Mg(2+).

The protein resides in the cell membrane. It carries out the reaction alpha-ribazole + adenosylcob(III)inamide-GDP = adenosylcob(III)alamin + GMP + H(+). The catalysed reaction is alpha-ribazole 5'-phosphate + adenosylcob(III)inamide-GDP = adenosylcob(III)alamin 5'-phosphate + GMP + H(+). It functions in the pathway cofactor biosynthesis; adenosylcobalamin biosynthesis; adenosylcobalamin from cob(II)yrinate a,c-diamide: step 7/7. Its function is as follows. Joins adenosylcobinamide-GDP and alpha-ribazole to generate adenosylcobalamin (Ado-cobalamin). Also synthesizes adenosylcobalamin 5'-phosphate from adenosylcobinamide-GDP and alpha-ribazole 5'-phosphate. The chain is Adenosylcobinamide-GDP ribazoletransferase from Clostridium botulinum (strain Kyoto / Type A2).